The chain runs to 63 residues: Insect toxin TbIT-1 (63 aa).

Residues K2–B63 form the LCN-type CS-alpha/beta domain. Disulfide bonds link C12–C62, C16–C38, C24–C43, and C28–C45.

Belongs to the long (4 C-C) scorpion toxin superfamily. Sodium channel inhibitor family. Beta subfamily. In terms of tissue distribution, expressed by the venom gland.

It localises to the secreted. In terms of biological role, beta toxins bind voltage-independently at site-4 of sodium channels (Nav) and shift the voltage of activation toward more negative potentials thereby affecting sodium channel activation and promoting spontaneous and repetitive firing. This toxin is only active against insects. This is Insect toxin TbIT-1 from Tityus bahiensis (Brazilian scorpion).